A 368-amino-acid polypeptide reads, in one-letter code: Polymerase delta-interacting protein 2 (368 aa).

The transit peptide at Met-1 to Leu-51 directs the protein to the mitochondrion. Residues Arg-235–Lys-360 form the ApaG domain. Thr-292 bears the Phosphothreonine mark.

As to quaternary structure, interacts with PCNA and POLD2. Interacts with SSBP1. Interacts with PRIMPOL; leading to enhance DNA polymerase activity of PRIMPOL. Interacts with POLH. Interacts with POLD1; leading to stimulate DNA polymerase activity of POLD1.

It localises to the mitochondrion matrix. It is found in the nucleus. Involved in DNA damage tolerance by regulating translesion synthesis (TLS) of templates carrying DNA damage lesions such as 8oxoG and abasic sites. May act by stimulating activity of DNA polymerases involved in TLS, such as PRIMPOL and polymerase delta (POLD1). The sequence is that of Polymerase delta-interacting protein 2 from Homo sapiens (Human).